The chain runs to 599 residues: Zinc metalloproteinase dpy-31 (599 aa).

Positions 1–22 are cleaved as a signal peptide; that stretch reads MALLKPFLSRTFSSFFATITGG. The propeptide occupies 23–211; the sequence is RNLIDSIEEL…IQHGRRTKRK (189 aa). Residues 211–410 form the Peptidase M12A domain; that stretch reads KFIRSELRRW…IRLMNVIYCS (200 aa). An N-linked (GlcNAc...) asparagine glycan is attached at Asn-251. Disulfide bonds link Cys-254–Cys-409, Cys-277–Cys-298, Cys-413–Cys-433, Cys-435–Cys-444, and Cys-455–Cys-483. His-306 contributes to the Zn(2+) binding site. Glu-307 is a catalytic residue. Zn(2+) is bound by residues His-310 and His-316. Residues 405–445 enclose the EGF-like domain; it reads NVIYCSDSCAQKLPCQRGGYTDPRRCGRCRCPDGFTGKLCE. The region spanning 455-571 is the CUB domain; it reads CGGRIELTSS…KGFQAQVRAL (117 aa). Asn-522 is a glycosylation site (N-linked (GlcNAc...) asparagine).

It depends on Zn(2+) as a cofactor.

The protein resides in the secreted. Inhibited by marimastat and tripeptide hydroxamic acids. Functionally, metalloprotease which cleaves the carboxyl terminus of procollagens to mature collagens. Probably involved in cuticular collagen maturation. This Brugia malayi (Filarial nematode worm) protein is Zinc metalloproteinase dpy-31.